The chain runs to 61 residues: Small ribosomal subunit protein uS14 (61 aa).

Residues Cys-24, Cys-27, Cys-40, and Cys-43 each coordinate Zn(2+).

It belongs to the universal ribosomal protein uS14 family. Zinc-binding uS14 subfamily. As to quaternary structure, part of the 30S ribosomal subunit. Contacts proteins S3 and S10. Zn(2+) serves as cofactor.

Its function is as follows. Binds 16S rRNA, required for the assembly of 30S particles and may also be responsible for determining the conformation of the 16S rRNA at the A site. The protein is Small ribosomal subunit protein uS14 of Roseiflexus sp. (strain RS-1).